The following is a 614-amino-acid chain: Chaperone protein DnaK (614 aa).

Thr173 carries the post-translational modification Phosphothreonine; by autocatalysis. 2 stretches are compositionally biased toward basic and acidic residues: residues 490–509 and 529–542; these read EENA…RNEA and EEDK…KEAL. 3 disordered regions span residues 490-510, 524-555, and 575-614; these read EENA…NEAD, GENI…DDIK, and QAAQ…DNQK. Residues 575–584 show a composition bias toward low complexity; the sequence is QAAQAQQQAQ. A compositionally biased stretch (basic and acidic residues) spans 599–614; it reads ADFKEVKDDDNQDNQK.

The protein belongs to the heat shock protein 70 family.

Functionally, acts as a chaperone. This chain is Chaperone protein DnaK, found in Staphylococcus saprophyticus subsp. saprophyticus (strain ATCC 15305 / DSM 20229 / NCIMB 8711 / NCTC 7292 / S-41).